The following is a 606-amino-acid chain: Mitogen-activated protein kinase 20 (606 aa).

The 292-residue stretch at 25–316 folds into the Protein kinase domain; it reads FKVQEVIGKG…AEEALADPYF (292 aa). Residues 31–39 and K54 each bind ATP; that span reads IGKGSYGVV. The Proton acceptor role is filled by D151. T187 carries the post-translational modification Phosphothreonine. The TXY signature appears at 187-189; sequence TDY. Y189 carries the post-translational modification Phosphotyrosine. Position 192 is a phosphothreonine (T192).

The protein belongs to the protein kinase superfamily. CMGC Ser/Thr protein kinase family. MAP kinase subfamily. Dually phosphorylated on Thr-187 and Tyr-189, which activates the enzyme.

The catalysed reaction is L-seryl-[protein] + ATP = O-phospho-L-seryl-[protein] + ADP + H(+). It catalyses the reaction L-threonyl-[protein] + ATP = O-phospho-L-threonyl-[protein] + ADP + H(+). Its activity is regulated as follows. Activated by threonine and tyrosine phosphorylation. The polypeptide is Mitogen-activated protein kinase 20 (MPK20) (Arabidopsis thaliana (Mouse-ear cress)).